A 193-amino-acid polypeptide reads, in one-letter code: Probable GTP-binding protein EngB (193 aa).

Positions 22 to 193 constitute an EngB-type G domain; sequence LLPEVALAGR…AAWEAIYRHL (172 aa). GTP-binding positions include 30 to 37, 57 to 61, 75 to 78, 142 to 145, and 174 to 176; these read GRSNVGKS, GKTQT, DVPG, TKLD, and FSS. 2 residues coordinate Mg(2+): Ser-37 and Thr-59.

This sequence belongs to the TRAFAC class TrmE-Era-EngA-EngB-Septin-like GTPase superfamily. EngB GTPase family. Requires Mg(2+) as cofactor.

Functionally, necessary for normal cell division and for the maintenance of normal septation. This Exiguobacterium sibiricum (strain DSM 17290 / CCUG 55495 / CIP 109462 / JCM 13490 / 255-15) protein is Probable GTP-binding protein EngB.